A 466-amino-acid polypeptide reads, in one-letter code: Flagellum-specific ATP synthase (466 aa).

194 to 201 contacts ATP; the sequence is SSSGLGKS.

Belongs to the ATPase alpha/beta chains family.

The protein resides in the cytoplasm. It catalyses the reaction ATP + H2O + 4 H(+)(in) = ADP + phosphate + 5 H(+)(out). Its function is as follows. Probable catalytic subunit of a protein translocase for flagellum-specific export, or a proton translocase involved in local circuits at the flagellum. May be involved in a specialized protein export pathway that proceeds without signal peptide cleavage. The protein is Flagellum-specific ATP synthase (fliI) of Buchnera aphidicola subsp. Schizaphis graminum (strain Sg).